We begin with the raw amino-acid sequence, 124 residues long: Large ribosomal subunit protein bL12 (124 aa).

It belongs to the bacterial ribosomal protein bL12 family. Homodimer. Part of the ribosomal stalk of the 50S ribosomal subunit. Forms a multimeric L10(L12)X complex, where L10 forms an elongated spine to which 2 to 4 L12 dimers bind in a sequential fashion. Binds GTP-bound translation factors.

In terms of biological role, forms part of the ribosomal stalk which helps the ribosome interact with GTP-bound translation factors. Is thus essential for accurate translation. The sequence is that of Large ribosomal subunit protein bL12 from Paracoccus denitrificans (strain Pd 1222).